The primary structure comprises 354 residues: Replication factor C subunit 5 (354 aa).

ATP contacts are provided by residues valine 5, serine 17, 43 to 51 (GPNGTGKKT), and arginine 231.

Belongs to the activator 1 small subunits family. As to quaternary structure, replication factor C (RFC) is a heteropentamer of subunits RFC1, RFC2, RFC3, RFC4 and RFC5 and forms a complex with POL30/PCNA in the presence of ATP. Component of the RAD24-RFC complex which consists of RAD24, RFC2, RFC3, RFC4 and RFC5 and associates with the checkpoint clamp DDC1:MEC3:RAD17 complex. Component of the ELG1-RFC complex which consists of ELG1, RFC2, RFC3, RFC4 and RFC5. Component of the CTF18-RFC complex, which consists of CTF18, CTF8, DCC1, RFC2, RFC3, RFC4 and RFC5. RFC5 interacts with ECO1.

It localises to the nucleus. Functionally, component of ATP-dependent clamp loader (RFC and RFC-like) complexes for DNA clamps, such as the POL30/PCNA homotrimer and the checkpoint clamp DDC1:MEC3:RAD17 complex. During a clamp loading circle, the RFC:clamp complex binds to DNA and the recognition of the double-stranded/single-stranded junction stimulates ATP hydrolysis by RFC. The complex presumably provides bipartite ATP sites in which one subunit supplies a catalytic site for hydrolysis of ATP bound to the neighboring subunit. Dissociation of RFC from the clamp leaves the clamp encircling DNA. Component of the replication factor C (RFC or activator 1) complex which loads POL30/PCNA and acts during elongation of primed DNA templates by DNA polymerase delta and epsilon. RFC has an essential but redundant activity in sister chromatid cohesion establishment. Component of the RFC-like complex CTF18-RFC which is required for efficient establishment of chromosome cohesion during S-phase and may load or unload POL30/PCNA. Component of the RFC-like RAD24-RFC complex which loads the checkpoint clamp DDC1:MEC3:RAD17 complex and is involved in DNA repair pathways. Component of the RFC-like ELG1-RFC complex which appears to have a role in DNA replication, replication fork re-start, recombination and repair. The sequence is that of Replication factor C subunit 5 (RFC5) from Saccharomyces cerevisiae (strain ATCC 204508 / S288c) (Baker's yeast).